The chain runs to 578 residues: Triokinase/FMN cyclase (578 aa).

The DhaK domain maps to 9 to 336 (SVEGCADDAL…IDAETTAKAW (328 aa)). Dihydroxyacetone is bound by residues 56 to 59 (GSGH), Lys109, and Asp114. The active-site Tele-hemiaminal-histidine intermediate is the His221. The 200-residue stretch at 372–571 (KQMALVLDRI…AAAIFRAILE (200 aa)) folds into the DhaL domain. ATP-binding positions include 401–404 (DGDC), 446–447 (SS), Gly486, and 494–495 (TM). Phosphoserine occurs at positions 511 and 545. Position 556–558 (556–558 (DPG)) interacts with ATP.

Belongs to the dihydroxyacetone kinase (DAK) family. In terms of assembly, homodimer. Interacts with IFIH1 (via the CARD domains), the interaction is inhibited by viral infection. Mg(2+) serves as cofactor. The cofactor is Mn(2+). Co(2+) is required as a cofactor.

It carries out the reaction dihydroxyacetone + ATP = dihydroxyacetone phosphate + ADP + H(+). The catalysed reaction is D-glyceraldehyde + ATP = D-glyceraldehyde 3-phosphate + ADP + H(+). The enzyme catalyses FAD = riboflavin cyclic-4',5'-phosphate + AMP + H(+). Each activity is inhibited by the substrate(s) of the other. In terms of biological role, catalyzes both the phosphorylation of dihydroxyacetone and of glyceraldehyde, and the splitting of ribonucleoside diphosphate-X compounds among which FAD is the best substrate. Represses IFIH1-mediated cellular antiviral response. In Mus musculus (Mouse), this protein is Triokinase/FMN cyclase.